The chain runs to 327 residues: MRSRSNLIGLINFFTFLLSIPILGGGIWLSSRANSTDCLRFLQWPLIIIGISIMVISLAGIAGACYQNKFLMWLYLFTMFFVIAALIGFTIFAYVVTDKGSGRFVMNRRYLDYYLNDYSGWLKDRVTDNGYWRDIGSCVRDSGVCKKIGRDLNGVPETAHMFYFRNLSPVESGCCKPPTDCGYTYVNETVWIPGGEMVGPNPDCMLWNNDQRLLCYQCSSCKAGVLGSLKKSWRKVSVINIVVVIILVIFYVIACAAYQNVKRMYNDEPVGEARMTNLILVIFKFKEILVQFFFGIVFLLLFNGLMVCCCNDKFAFSVFFFGYVTYA.

The Cytoplasmic portion of the chain corresponds to 1 to 6; the sequence is MRSRSN. Residues 7 to 27 form a helical membrane-spanning segment; sequence LIGLINFFTFLLSIPILGGGI. Residues 28 to 43 are Extracellular-facing; sequence WLSSRANSTDCLRFLQ. Asn-34 carries an N-linked (GlcNAc...) asparagine glycan. A helical transmembrane segment spans residues 44–64; it reads WPLIIIGISIMVISLAGIAGA. Over 65–75 the chain is Cytoplasmic; it reads CYQNKFLMWLY. A helical transmembrane segment spans residues 76–96; the sequence is LFTMFFVIAALIGFTIFAYVV. The Extracellular segment spans residues 97–235; that stretch reads TDKGSGRFVM…LGSLKKSWRK (139 aa). Residue Asn-187 is glycosylated (N-linked (GlcNAc...) asparagine). A helical transmembrane segment spans residues 236–256; the sequence is VSVINIVVVIILVIFYVIACA. The Cytoplasmic segment spans residues 257-287; the sequence is AYQNVKRMYNDEPVGEARMTNLILVIFKFKE. Residues 288 to 308 traverse the membrane as a helical segment; sequence ILVQFFFGIVFLLLFNGLMVC. The Extracellular segment spans residues 309-327; the sequence is CCNDKFAFSVFFFGYVTYA.

The protein belongs to the tetraspanin (TM4SF) family.

It is found in the membrane. May be involved in the regulation of cell differentiation. This is Tetraspanin-4 (TET4) from Arabidopsis thaliana (Mouse-ear cress).